The following is a 147-amino-acid chain: Helix-loop-helix protein 13 (147 aa).

The 53-residue stretch at 41–93 (EERQTASIRERKRMCSINVAFIELRNYIPTFPYEKRLSKIDTLNLAIAYINML) folds into the bHLH domain.

In terms of tissue distribution, expressed in hermaphrodite dopaminergic neurons (ADE, CEP, and PDE).

The protein localises to the nucleus. Its subcellular location is the cytoplasm. Transcriptional activator. Shown to have a role in the negative regulation of exit from L1 arrest and dauer diapause dependent on IIS signaling (insulin and insulin-like growth factor (IGF) signaling). Hypodermal expression is regulated by IIS/daf-16 while neuronal expression is not under the control of IIS/daf-16. In Caenorhabditis elegans, this protein is Helix-loop-helix protein 13.